A 284-amino-acid chain; its full sequence is Nucleotide-binding protein TTE1834 (284 aa).

8–15 (GLSGAGKT) is an ATP binding site. GTP is bound at residue 58-61 (DLRG).

This sequence belongs to the RapZ-like family.

In terms of biological role, displays ATPase and GTPase activities. In Caldanaerobacter subterraneus subsp. tengcongensis (strain DSM 15242 / JCM 11007 / NBRC 100824 / MB4) (Thermoanaerobacter tengcongensis), this protein is Nucleotide-binding protein TTE1834.